Reading from the N-terminus, the 216-residue chain is MRLGILGGTFNPIHNAHLRIAEEARDLYELDRVVFIPAATPPHKPLVGELSFASRLEMVRLAVADNSGFMVSDMEGVRGGRSYSIDTLRELKAEHPDDELFFIVGADSFNDISTWKEYAAIFGLCNVISVQRPGSTITSLAEVLPVAIAGEFCYDPAANRLNHCSGHAVYALDGVLLDISSSHIRLLVQGGRSIRYLIPDAVEQYIKEQRLYVDAR.

This sequence belongs to the NadD family.

The catalysed reaction is nicotinate beta-D-ribonucleotide + ATP + H(+) = deamido-NAD(+) + diphosphate. The protein operates within cofactor biosynthesis; NAD(+) biosynthesis; deamido-NAD(+) from nicotinate D-ribonucleotide: step 1/1. In terms of biological role, catalyzes the reversible adenylation of nicotinate mononucleotide (NaMN) to nicotinic acid adenine dinucleotide (NaAD). In Geobacter sp. (strain M21), this protein is Probable nicotinate-nucleotide adenylyltransferase.